Consider the following 252-residue polypeptide: Cell division protein ZapD (252 aa).

Belongs to the ZapD family. Interacts with FtsZ.

It localises to the cytoplasm. In terms of biological role, cell division factor that enhances FtsZ-ring assembly. Directly interacts with FtsZ and promotes bundling of FtsZ protofilaments, with a reduction in FtsZ GTPase activity. This is Cell division protein ZapD from Cupriavidus pinatubonensis (strain JMP 134 / LMG 1197) (Cupriavidus necator (strain JMP 134)).